The following is a 152-amino-acid chain: Peptide deformylase (152 aa).

Fe cation-binding residues include C91 and H133. E134 is a catalytic residue. H137 serves as a coordination point for Fe cation.

This sequence belongs to the polypeptide deformylase family. It depends on Fe(2+) as a cofactor.

It catalyses the reaction N-terminal N-formyl-L-methionyl-[peptide] + H2O = N-terminal L-methionyl-[peptide] + formate. Functionally, removes the formyl group from the N-terminal Met of newly synthesized proteins. Requires at least a dipeptide for an efficient rate of reaction. N-terminal L-methionine is a prerequisite for activity but the enzyme has broad specificity at other positions. The sequence is that of Peptide deformylase from Wigglesworthia glossinidia brevipalpis.